Reading from the N-terminus, the 185-residue chain is Transposon Tn3 resolvase (185 aa).

One can recognise a Resolvase/invertase-type recombinase catalytic domain in the interval Arg2 to Gly137. The O-(5'-phospho-DNA)-serine intermediate role is filled by Ser10. The segment at residues Ala161–Glu180 is a DNA-binding region (H-T-H motif).

It belongs to the site-specific recombinase resolvase family.

In terms of biological role, resolvase catalyzes the resolution (a site-specific recombination) of the cointegrated replicon to yield the final transposition products. This chain is Transposon Tn3 resolvase (tnpR), found in Escherichia coli.